The following is a 470-amino-acid chain: Iron-sulfur cluster assembly protein SufB (470 aa).

The protein belongs to the iron-sulfur cluster assembly SufBD family. As to quaternary structure, component of a complex composed of SufB, SufC and SufD in a stoichiometric ratio of 1:2:1. Interacts with SufC. Interacts with SufD.

It participates in cofactor biosynthesis; iron-sulfur cluster biosynthesis. In terms of biological role, participates in the sulfur mobilization (SUF) pathway for iron-sulfur (Fe-S) cluster biogenesis. As part of a complex consisting of SufB-SufC(2)-SufD, involved in assembly of [4Fe-4S] clusters. Exhibits ATPase activity. This is Iron-sulfur cluster assembly protein SufB from Plasmodium falciparum (isolate 3D7).